A 150-amino-acid polypeptide reads, in one-letter code: Large ribosomal subunit protein bL9 (150 aa).

The protein belongs to the bacterial ribosomal protein bL9 family.

Its function is as follows. Binds to the 23S rRNA. The protein is Large ribosomal subunit protein bL9 of Stenotrophomonas maltophilia (strain R551-3).